We begin with the raw amino-acid sequence, 102 residues long: Large ribosomal subunit protein bL21 (102 aa).

The protein belongs to the bacterial ribosomal protein bL21 family. Part of the 50S ribosomal subunit. Contacts protein L20.

Its function is as follows. This protein binds to 23S rRNA in the presence of protein L20. The polypeptide is Large ribosomal subunit protein bL21 (Bacillus licheniformis (strain ATCC 14580 / DSM 13 / JCM 2505 / CCUG 7422 / NBRC 12200 / NCIMB 9375 / NCTC 10341 / NRRL NRS-1264 / Gibson 46)).